A 556-amino-acid chain; its full sequence is Dihydroxy-acid dehydratase (556 aa).

Asp-78 is a Mg(2+) binding site. Residue Cys-119 participates in [2Fe-2S] cluster binding. 2 residues coordinate Mg(2+): Asp-120 and Lys-121. Lys-121 carries the N6-carboxylysine modification. Cys-191 serves as a coordination point for [2Fe-2S] cluster. Glu-442 contributes to the Mg(2+) binding site. The active-site Proton acceptor is Ser-468.

This sequence belongs to the IlvD/Edd family. In terms of assembly, homodimer. The cofactor is [2Fe-2S] cluster. Mg(2+) serves as cofactor.

The catalysed reaction is (2R)-2,3-dihydroxy-3-methylbutanoate = 3-methyl-2-oxobutanoate + H2O. It catalyses the reaction (2R,3R)-2,3-dihydroxy-3-methylpentanoate = (S)-3-methyl-2-oxopentanoate + H2O. The protein operates within amino-acid biosynthesis; L-isoleucine biosynthesis; L-isoleucine from 2-oxobutanoate: step 3/4. It functions in the pathway amino-acid biosynthesis; L-valine biosynthesis; L-valine from pyruvate: step 3/4. Functionally, functions in the biosynthesis of branched-chain amino acids. Catalyzes the dehydration of (2R,3R)-2,3-dihydroxy-3-methylpentanoate (2,3-dihydroxy-3-methylvalerate) into 2-oxo-3-methylpentanoate (2-oxo-3-methylvalerate) and of (2R)-2,3-dihydroxy-3-methylbutanoate (2,3-dihydroxyisovalerate) into 2-oxo-3-methylbutanoate (2-oxoisovalerate), the penultimate precursor to L-isoleucine and L-valine, respectively. This chain is Dihydroxy-acid dehydratase, found in Caldanaerobacter subterraneus subsp. tengcongensis (strain DSM 15242 / JCM 11007 / NBRC 100824 / MB4) (Thermoanaerobacter tengcongensis).